A 365-amino-acid chain; its full sequence is tRNA(Met) cytidine acetate ligase (365 aa).

Residues 7–20 (IAEFNPFHNGHKYL), glycine 96, asparagine 152, and arginine 175 each bind ATP.

It belongs to the TmcAL family.

Its subcellular location is the cytoplasm. It carries out the reaction cytidine(34) in elongator tRNA(Met) + acetate + ATP = N(4)-acetylcytidine(34) in elongator tRNA(Met) + AMP + diphosphate. Its function is as follows. Catalyzes the formation of N(4)-acetylcytidine (ac(4)C) at the wobble position of elongator tRNA(Met), using acetate and ATP as substrates. First activates an acetate ion to form acetyladenylate (Ac-AMP) and then transfers the acetyl group to tRNA to form ac(4)C34. This Streptococcus pneumoniae (strain ATCC BAA-255 / R6) protein is tRNA(Met) cytidine acetate ligase.